The chain runs to 454 residues: CCA-adding enzyme (454 aa).

The ATP site is built by Ser-59 and Arg-62. The CTP site is built by Ser-59 and Arg-62. Mg(2+)-binding residues include Asp-71, Asp-73, and Asp-125. The ATP site is built by His-148, Lys-167, and Tyr-176. Residues His-148, Lys-167, and Tyr-176 each coordinate CTP.

The protein belongs to the tRNA nucleotidyltransferase/poly(A) polymerase family. Archaeal CCA-adding enzyme subfamily. In terms of assembly, homodimer. The cofactor is Mg(2+).

The catalysed reaction is a tRNA precursor + 2 CTP + ATP = a tRNA with a 3' CCA end + 3 diphosphate. The enzyme catalyses a tRNA with a 3' CCA end + 2 CTP + ATP = a tRNA with a 3' CCACCA end + 3 diphosphate. In terms of biological role, catalyzes the addition and repair of the essential 3'-terminal CCA sequence in tRNAs without using a nucleic acid template. Adds these three nucleotides in the order of C, C, and A to the tRNA nucleotide-73, using CTP and ATP as substrates and producing inorganic pyrophosphate. tRNA 3'-terminal CCA addition is required both for tRNA processing and repair. Also involved in tRNA surveillance by mediating tandem CCA addition to generate a CCACCA at the 3' terminus of unstable tRNAs. While stable tRNAs receive only 3'-terminal CCA, unstable tRNAs are marked with CCACCA and rapidly degraded. This chain is CCA-adding enzyme, found in Methanosarcina barkeri (strain Fusaro / DSM 804).